The sequence spans 205 residues: Holliday junction branch migration complex subunit RuvA (205 aa).

Residues 1 to 64 (MIGRLRGIIL…EDAQLLFGFN (64 aa)) form a domain I region. The tract at residues 65–143 (DKQERALFRE…GLSGDLFNSV (79 aa)) is domain II. The segment at 144 to 156 (SDIPLTSPANVDN) is flexible linker. The tract at residues 157 to 205 (RVGEPEAEAAAALVALGYKPQEASRMISKIARPDADCETLIRDALRAAL) is domain III.

This sequence belongs to the RuvA family. As to quaternary structure, homotetramer. Forms an RuvA(8)-RuvB(12)-Holliday junction (HJ) complex. HJ DNA is sandwiched between 2 RuvA tetramers; dsDNA enters through RuvA and exits via RuvB. An RuvB hexamer assembles on each DNA strand where it exits the tetramer. Each RuvB hexamer is contacted by two RuvA subunits (via domain III) on 2 adjacent RuvB subunits; this complex drives branch migration. In the full resolvosome a probable DNA-RuvA(4)-RuvB(12)-RuvC(2) complex forms which resolves the HJ.

The protein localises to the cytoplasm. In terms of biological role, the RuvA-RuvB-RuvC complex processes Holliday junction (HJ) DNA during genetic recombination and DNA repair, while the RuvA-RuvB complex plays an important role in the rescue of blocked DNA replication forks via replication fork reversal (RFR). RuvA specifically binds to HJ cruciform DNA, conferring on it an open structure. The RuvB hexamer acts as an ATP-dependent pump, pulling dsDNA into and through the RuvAB complex. HJ branch migration allows RuvC to scan DNA until it finds its consensus sequence, where it cleaves and resolves the cruciform DNA. The polypeptide is Holliday junction branch migration complex subunit RuvA (Pectobacterium atrosepticum (strain SCRI 1043 / ATCC BAA-672) (Erwinia carotovora subsp. atroseptica)).